The primary structure comprises 76 residues: Translation initiation factor IF-1 (76 aa).

In terms of domain architecture, S1-like spans 1-72; the sequence is MAKKDVVVMQ…NKGRIVKREK (72 aa).

It belongs to the IF-1 family. Component of the 30S ribosomal translation pre-initiation complex which assembles on the 30S ribosome in the order IF-2 and IF-3, IF-1 and N-formylmethionyl-tRNA(fMet); mRNA recruitment can occur at any time during PIC assembly.

It is found in the cytoplasm. Its function is as follows. One of the essential components for the initiation of protein synthesis. Stabilizes the binding of IF-2 and IF-3 on the 30S subunit to which N-formylmethionyl-tRNA(fMet) subsequently binds. Helps modulate mRNA selection, yielding the 30S pre-initiation complex (PIC). Upon addition of the 50S ribosomal subunit IF-1, IF-2 and IF-3 are released leaving the mature 70S translation initiation complex. The sequence is that of Translation initiation factor IF-1 from Petrotoga mobilis (strain DSM 10674 / SJ95).